The chain runs to 96 residues: Aspartyl/glutamyl-tRNA(Asn/Gln) amidotransferase subunit C (96 aa).

Belongs to the GatC family. In terms of assembly, heterotrimer of A, B and C subunits.

The enzyme catalyses L-glutamyl-tRNA(Gln) + L-glutamine + ATP + H2O = L-glutaminyl-tRNA(Gln) + L-glutamate + ADP + phosphate + H(+). It catalyses the reaction L-aspartyl-tRNA(Asn) + L-glutamine + ATP + H2O = L-asparaginyl-tRNA(Asn) + L-glutamate + ADP + phosphate + 2 H(+). Functionally, allows the formation of correctly charged Asn-tRNA(Asn) or Gln-tRNA(Gln) through the transamidation of misacylated Asp-tRNA(Asn) or Glu-tRNA(Gln) in organisms which lack either or both of asparaginyl-tRNA or glutaminyl-tRNA synthetases. The reaction takes place in the presence of glutamine and ATP through an activated phospho-Asp-tRNA(Asn) or phospho-Glu-tRNA(Gln). This Geobacillus kaustophilus (strain HTA426) protein is Aspartyl/glutamyl-tRNA(Asn/Gln) amidotransferase subunit C.